A 397-amino-acid chain; its full sequence is Elongation factor Tu (397 aa).

A tr-type G domain is found at 10 to 207 (KPHVNIGTIG…AVDESIPEPV (198 aa)). The segment at 19–26 (GHVDHGKT) is G1. 19 to 26 (GHVDHGKT) lines the GTP pocket. Thr-26 contacts Mg(2+). The interval 63 to 67 (GITIN) is G2. Residues 84-87 (DAPG) form a G3 region. GTP contacts are provided by residues 84-88 (DAPGH) and 139-142 (NKSD). The tract at residues 139–142 (NKSD) is G4. Residues 177-179 (SGL) are G5.

Belongs to the TRAFAC class translation factor GTPase superfamily. Classic translation factor GTPase family. EF-Tu/EF-1A subfamily. As to quaternary structure, monomer.

Its subcellular location is the cytoplasm. The catalysed reaction is GTP + H2O = GDP + phosphate + H(+). GTP hydrolase that promotes the GTP-dependent binding of aminoacyl-tRNA to the A-site of ribosomes during protein biosynthesis. In Clavibacter sepedonicus (Clavibacter michiganensis subsp. sepedonicus), this protein is Elongation factor Tu.